We begin with the raw amino-acid sequence, 267 residues long: Orotidine 5'-phosphate decarboxylase (267 aa).

Lysine 93 serves as the catalytic Proton donor.

This sequence belongs to the OMP decarboxylase family. Type 2 subfamily.

It carries out the reaction orotidine 5'-phosphate + H(+) = UMP + CO2. The protein operates within pyrimidine metabolism; UMP biosynthesis via de novo pathway; UMP from orotate: step 2/2. The protein is Orotidine 5'-phosphate decarboxylase of Herpetosiphon aurantiacus (strain ATCC 23779 / DSM 785 / 114-95).